The primary structure comprises 131 residues: MSTSTKWLNEVKWDENGLVPVIAQEASTGDVLMFAWMNREALQRTAETGNAIYWSRSRRKLWHKGEESGHVQKVVELRIDCDNDVVLMKVEQVGGIACHTGRHSCFFQKYLADGRWETVEPVLKDPKDIYS.

D80 contacts Mg(2+). C81 provides a ligand contact to Zn(2+). D82 and D84 together coordinate Mg(2+). Residues C98 and C105 each contribute to the Zn(2+) site.

It belongs to the PRA-CH family. As to quaternary structure, homodimer. Requires Mg(2+) as cofactor. Zn(2+) serves as cofactor.

Its subcellular location is the cytoplasm. The catalysed reaction is 1-(5-phospho-beta-D-ribosyl)-5'-AMP + H2O = 1-(5-phospho-beta-D-ribosyl)-5-[(5-phospho-beta-D-ribosylamino)methylideneamino]imidazole-4-carboxamide. It participates in amino-acid biosynthesis; L-histidine biosynthesis; L-histidine from 5-phospho-alpha-D-ribose 1-diphosphate: step 3/9. Functionally, catalyzes the hydrolysis of the adenine ring of phosphoribosyl-AMP. In Azoarcus sp. (strain BH72), this protein is Phosphoribosyl-AMP cyclohydrolase.